The sequence spans 726 residues: Catalase-peroxidase (726 aa).

A disordered region spans residues 1 to 33 (MSTSDDIHNTTATGKCPFHQGGHDQSAGGGTTT). The segment at residues 105-226 (WHGAGTYRSI…LGATEMGLIY (122 aa)) is a cross-link (tryptophyl-tyrosyl-methioninium (Trp-Tyr) (with M-252)). Catalysis depends on histidine 106, which acts as the Proton acceptor. The tryptophyl-tyrosyl-methioninium (Tyr-Met) (with W-105) cross-link spans 226–252 (YVNPEGPDHSGEPLSAAAAIRATFGNM). Residue histidine 267 coordinates heme b.

Belongs to the peroxidase family. Peroxidase/catalase subfamily. As to quaternary structure, homodimer or homotetramer. Requires heme b as cofactor. Post-translationally, formation of the three residue Trp-Tyr-Met cross-link is important for the catalase, but not the peroxidase activity of the enzyme.

It carries out the reaction H2O2 + AH2 = A + 2 H2O. The catalysed reaction is 2 H2O2 = O2 + 2 H2O. In terms of biological role, bifunctional enzyme with both catalase and broad-spectrum peroxidase activity. This Escherichia coli O1:K1 / APEC protein is Catalase-peroxidase.